The primary structure comprises 260 residues: Protein SVS1 (260 aa).

An N-terminal signal peptide occupies residues 1 to 19 (MIFKILCSLLLVTSNFASA). N-linked (GlcNAc...) asparagine glycosylation is found at N23, N249, and N256.

Its function is as follows. Required for vanadate resistance. The chain is Protein SVS1 (SVS1) from Saccharomyces cerevisiae (strain ATCC 204508 / S288c) (Baker's yeast).